A 274-amino-acid chain; its full sequence is tRNA-cytidine(32) 2-sulfurtransferase (274 aa).

The short motif at 40 to 45 (SGGKDS) is the PP-loop motif element. Cys115, Cys118, and Cys206 together coordinate [4Fe-4S] cluster.

Belongs to the TtcA family. Homodimer. It depends on Mg(2+) as a cofactor. Requires [4Fe-4S] cluster as cofactor.

It localises to the cytoplasm. The catalysed reaction is cytidine(32) in tRNA + S-sulfanyl-L-cysteinyl-[cysteine desulfurase] + AH2 + ATP = 2-thiocytidine(32) in tRNA + L-cysteinyl-[cysteine desulfurase] + A + AMP + diphosphate + H(+). It participates in tRNA modification. Catalyzes the ATP-dependent 2-thiolation of cytidine in position 32 of tRNA, to form 2-thiocytidine (s(2)C32). The sulfur atoms are provided by the cysteine/cysteine desulfurase (IscS) system. The polypeptide is tRNA-cytidine(32) 2-sulfurtransferase (Pseudomonas putida (strain GB-1)).